Here is a 431-residue protein sequence, read N- to C-terminus: Maintenance of mitochondrial morphology protein 1 (431 aa).

Over 1–103 the chain is Lumenal; sequence MVSALEVKSI…QLISWSFAQG (103 aa). Residues 104-124 form a helical membrane-spanning segment; it reads LIIGQLSVVIFLIFFVKFFIF. Over 125–431 the chain is Cytoplasmic; that stretch reads TDASSKMDNP…EDESSKTPHS (307 aa). The SMP-LTD domain occupies 192–404; it reads SAESLDWFNV…EPRFQSVKLP (213 aa). The interval 412–431 is disordered; that stretch reads NTREEVIHKTEDESSKTPHS.

The protein belongs to the MMM1 family. As to quaternary structure, homodimer. Component of the ER-mitochondria encounter structure (ERMES) or MDM complex, composed of MMM1, MDM10, MDM12 and MDM34. An MMM1 homodimer associates with one molecule of MDM12 on each side in a pairwise head-to-tail manner, and the SMP-LTD domains of MMM1 and MDM12 generate a continuous hydrophobic tunnel for phospholipid trafficking.

Its subcellular location is the endoplasmic reticulum membrane. Component of the ERMES/MDM complex, which serves as a molecular tether to connect the endoplasmic reticulum (ER) and mitochondria. Components of this complex are involved in the control of mitochondrial shape and protein biogenesis, and function in nonvesicular lipid trafficking between the ER and mitochondria. The MDM12-MMM1 subcomplex functions in the major beta-barrel assembly pathway that is responsible for biogenesis of all outer membrane beta-barrel proteins, and acts in a late step after the SAM complex. The MDM10-MDM12-MMM1 subcomplex further acts in the TOM40-specific pathway after the action of the MDM12-MMM1 complex. Essential for establishing and maintaining the structure of mitochondria and maintenance of mtDNA nucleoids. This is Maintenance of mitochondrial morphology protein 1 from Candida glabrata (strain ATCC 2001 / BCRC 20586 / JCM 3761 / NBRC 0622 / NRRL Y-65 / CBS 138) (Yeast).